A 512-amino-acid chain; its full sequence is UDP-N-acetylmuramate--L-alanine ligase (512 aa).

An ATP-binding site is contributed by 132–138; that stretch reads GAHGKTT.

Belongs to the MurCDEF family.

Its subcellular location is the cytoplasm. The catalysed reaction is UDP-N-acetyl-alpha-D-muramate + L-alanine + ATP = UDP-N-acetyl-alpha-D-muramoyl-L-alanine + ADP + phosphate + H(+). It participates in cell wall biogenesis; peptidoglycan biosynthesis. Cell wall formation. The polypeptide is UDP-N-acetylmuramate--L-alanine ligase (Bifidobacterium longum subsp. infantis (strain ATCC 15697 / DSM 20088 / JCM 1222 / NCTC 11817 / S12)).